The chain runs to 609 residues: UvrABC system protein C (609 aa).

Positions 19–97 (ASPGCYLWKS…IKKHNPRFNV (79 aa)) constitute a GIY-YIG domain. Positions 208–243 (ESLVSDLNIKMSNASERLDFEKAARYRDMLQRIQNF) constitute a UVR domain.

It belongs to the UvrC family. In terms of assembly, interacts with UvrB in an incision complex.

The protein resides in the cytoplasm. In terms of biological role, the UvrABC repair system catalyzes the recognition and processing of DNA lesions. UvrC both incises the 5' and 3' sides of the lesion. The N-terminal half is responsible for the 3' incision and the C-terminal half is responsible for the 5' incision. The chain is UvrABC system protein C from Leptospira interrogans serogroup Icterohaemorrhagiae serovar Lai (strain 56601).